A 523-amino-acid polypeptide reads, in one-letter code: NAD(P)H-quinone oxidoreductase subunit 2 (523 aa).

14 helical membrane-spanning segments follow: residues 29 to 49, 57 to 77, 94 to 114, 123 to 143, 147 to 167, 182 to 202, 223 to 243, 255 to 275, 291 to 311, 317 to 337, 345 to 365, 389 to 409, 424 to 444, and 477 to 497; these read AIAP…VDLA, WVPP…AQQW, LAIS…LISW, PIGE…LLCG, LVSV…LAGY, LLVG…LYGL, AALS…AVPF, PTPV…ALAL, LLFT…ALAQ, MLAY…VCGT, VLYM…IILF, LGLS…GFFG, LLVV…ISVI, and IALV…NPLF.

This sequence belongs to the complex I subunit 2 family. In terms of assembly, NDH-1 can be composed of about 15 different subunits; different subcomplexes with different compositions have been identified which probably have different functions.

The protein localises to the cellular thylakoid membrane. It carries out the reaction a plastoquinone + NADH + (n+1) H(+)(in) = a plastoquinol + NAD(+) + n H(+)(out). The enzyme catalyses a plastoquinone + NADPH + (n+1) H(+)(in) = a plastoquinol + NADP(+) + n H(+)(out). In terms of biological role, NDH-1 shuttles electrons from an unknown electron donor, via FMN and iron-sulfur (Fe-S) centers, to quinones in the respiratory and/or the photosynthetic chain. The immediate electron acceptor for the enzyme in this species is believed to be plastoquinone. Couples the redox reaction to proton translocation, and thus conserves the redox energy in a proton gradient. Cyanobacterial NDH-1 also plays a role in inorganic carbon-concentration. The chain is NAD(P)H-quinone oxidoreductase subunit 2 from Prochlorococcus marinus (strain MIT 9313).